The chain runs to 443 residues: Aklavinone 7-beta-L-rhodosaminyltransferase (443 aa).

Positions 1–23 (MRVLLTSFALDAHFNGSVPLAWA) are cleaved as a signal peptide.

This sequence belongs to the glycosyltransferase 28 family.

It carries out the reaction dTDP-beta-L-rhodosamine + aklavinone = aclacinomycin T + dTDP + 2 H(+). Its activity is regulated as follows. The activity of AknS is substantially increased by the addition of the accessory protein AknT. Functionally, involved in the biosynthesis of the anthracycline antitumor agent aclacinomycin A. Catalyzes the transfer of the proximal deoxyhexose, L-rhodosamine, from dTDP-beta-L-rhodosamine to the C7-OH of aklavinone aglycone to yield aclacinomycin T (rhodosaminyl-aklavinone). It can also use dTDP-2-deoxy-beta-L-fucose, TDP-2-deoxyfucose, dTDP-4-amino-2-deoxyrhamnose, TDP-L-rhodosamine as sugar donor and epsilon-rhodomycinone as sugar acceptor. The chain is Aklavinone 7-beta-L-rhodosaminyltransferase from Streptomyces galilaeus.